The chain runs to 485 residues: MMLLRAARVPVLGRRFLSQQQLISKHVQEVDPEMFRILSDERSRQKHSVTLIPSENFTSKAVMDLLGSEMQNKYSEGYPGERYYGGNQFIDKAESLCQARALDLYGLDPEKWGVNVQALSGAPANLYAYSAVMEVGDRLMGLDLPHGGHLSHGYQLPSGTKISYISKYFNTMPYHVNTETGIIDYDTLAMTSKLFRPKVIVAGTSAYSRKLDYARFRKIADGCGAYLLSDMAHISGLVAANVIDSPFEHSDIVTTTTHKSLRGPRGAMIFYRKGIKKVNKKTGKETPFTFDKTINFSVFPGHQGGPHNHTISALAVALKQAKTPEFVEYQKQVVSNAKAFGDELLKRGFELVSGGTDNHLLLLNLSNMGIDGARLEAILEKINIAANKNTIPGDKSALFPSGLRVGTPAMTTRGFQEQDFKKVAEYIDNAVKLSIALKSQESADAKDVRSKLNSFKQLCDQSEPVQKLAEEVSSWVGTFPVPGEL.

Lys-259 bears the N6-(pyridoxal phosphate)lysine mark.

Belongs to the SHMT family. In terms of assembly, homotetramer. The cofactor is pyridoxal 5'-phosphate.

It localises to the mitochondrion. The catalysed reaction is (6R)-5,10-methylene-5,6,7,8-tetrahydrofolate + glycine + H2O = (6S)-5,6,7,8-tetrahydrofolate + L-serine. Its pathway is one-carbon metabolism; tetrahydrofolate interconversion. In terms of biological role, interconversion of serine and glycine. The chain is Serine hydroxymethyltransferase, mitochondrial (SHM1) from Candida glabrata (strain ATCC 2001 / BCRC 20586 / JCM 3761 / NBRC 0622 / NRRL Y-65 / CBS 138) (Yeast).